We begin with the raw amino-acid sequence, 268 residues long: Microtubule-associated protein RP/EB family member 1 (268 aa).

At Ala2 the chain carries N-acetylalanine. The Calponin-homology (CH) domain maps to 14–116; the sequence is NLSRHDMLAW…FVQWFKKFFD (103 aa). Residue Lys66 is modified to N6-crotonyllysine. Tyr124 carries the post-translational modification Phosphotyrosine. The interaction with MTUS2/TIP150 stretch occupies residues 124-268; the sequence is YDPVAARQGQ…GGPQEEQEEY (145 aa). Residues 146 to 180 form a disordered region; sequence LSKPKKPLGSSTAAPQRPIATQRTTAAPKAGPGMV. A compositionally biased stretch (polar residues) spans 154–170; sequence GSSTAAPQRPIATQRTT. A Phosphoserine modification is found at Ser155. Positions 185–255 constitute an EB1 C-terminal domain; it reads GVGNGDDEAA…LYATDEGFVI (71 aa). The interval 206 to 211 is interaction with APC; the sequence is TVEDLE. Positions 208 to 268 are DCTN1-binding; that stretch reads EDLEKERDFY…GGPQEEQEEY (61 aa). Lys220 is modified (N6-acetyllysine). Residues 220 to 242 form an APC-binding region; it reads KLRNIELICQENEGENDPVLQRI. The segment at 232 to 255 is interaction with SKA1; sequence EGENDPVLQRIVDILYATDEGFVI.

It belongs to the MAPRE family. In terms of assembly, homodimer. Heterodimer with MAPRE3. Interacts (via C-terminal residues 206-211) with APC (via C-terminal residues 2674-2845); the interaction inhibits association with and bundling of F-actin. Interacts with DCTN1, DIAPH1 and DIAPH2. Interacts with DCTN2, TERF1 and dynein intermediate chain. Interacts with CLASP2, DST, KIF2C and STIM1; probably required for their targeting to the growing microtubule plus ends. Interacts with MTUS2; interaction is direct and probably targets MTUS2 to microtubules. Interacts (via C-terminus) with SKA1 (via SXIP motif); the interaction is direct and stabilizes the kinetochore-microtubule attachment of the SKA1 complex. Interacts with APC2. Interacts with CLASP1. Interacts (via C-terminus) with CLIP1. Interacts with SLAIN2 and SLAIN1. Interacts with MACF1. Interacts with KIF18B; this interaction is required for efficient accumulation of KIF18B at microtubule plus ends. Interacts with MISP. Interacts with RABL2/RABL2A; binds preferentially to GTP-bound RABL2. Interacts with KCNAB2. Interacts with KNSTRN. Interacts with NCKAP5L. Interacts with AKAP9. Interacts with PDE4DIP isoform 2/MMG8/SMYLE; this interaction is required for its recruitment to the Golgi apparatus. May form a pericentrosomal complex with AKAP9, CDK5RAP2 and PDE4DIP isoform 2/MMG8/SMYLE; within this complex, MAPRE1 binding to CDK5RAP2 may be mediated by PDE4DIP. Contrary to other mammalian species, does not interact with CDK5RAP2, possibly due to the lack of conservation of the MAPRE1-binding motif in mouse CDK5RAP2. Interacts with AKNA. Interacts with GAS2L1, GAS2L2, and GAS2L3. Interacts with RARRES1 and AGBL2. Acetylation at Lys-220 by KAT2B/PCAF promotes dynamic kinetochore-microtubule interactions in early mitosis. Post-translationally, crotonylated by KAT5 during mitosis, promoting astral microtubule plasticity and dynamic connection between astral microtubules and the cortex during mitotic chromosome segregation, thereby ensuring accurate spindle positioning in mitosis. Decrotonylated by HDAC3. Expressed within the midpiece of sperm tail (at protein level).

It localises to the cytoplasm. Its subcellular location is the cytoskeleton. It is found in the microtubule organizing center. The protein localises to the centrosome. The protein resides in the spindle. It localises to the spindle pole. Plus-end tracking protein (+TIP) that binds to the plus-end of microtubules and regulates the dynamics of the microtubule cytoskeleton. Recruits other +TIP proteins to microtubules by binding to a conserved Ser-X-Leu-Pro (SXLP) motif in their polypeptide chains. Promotes cytoplasmic microtubule nucleation and elongation. Involved in mitotic spindle positioning by stabilizing microtubules and promoting dynamic connection between astral microtubules and the cortex during mitotic chromosome segregation. Assists chromosome alignment in metaphase by recruiting the SKA complex to the spindle and stabilizing its interactions with microtubule bundles (K-fibers). Also acts as a regulator of minus-end microtubule organization: interacts with the complex formed by AKAP9 and PDE4DIP, leading to recruit CAMSAP2 to the Golgi apparatus, thereby tethering non-centrosomal minus-end microtubules to the Golgi, an important step for polarized cell movement. Promotes elongation of CAMSAP2-decorated microtubule stretches on the minus-end of microtubules. Acts as a regulator of autophagosome transport via interaction with CAMSAP2. Functions downstream of Rho GTPases and DIAPH1 in stable microtubule formation. May play a role in cell migration. This chain is Microtubule-associated protein RP/EB family member 1 (Mapre1), found in Mus musculus (Mouse).